Consider the following 518-residue polypeptide: Integrator complex subunit 14 (518 aa).

A VWFA domain is found at 2-204 (PTVVVMDVSL…KNVQSMFGKL (203 aa)). 3 residues coordinate Mg(2+): Ser-10, Ser-12, and Thr-86.

It belongs to the Integrator subunit 14 family. As to quaternary structure, component of the Integrator complex, composed of core subunits INTS1, INTS2, INTS3, INTS4, INTS5, INTS6, INTS7, INTS8, INTS9/RC74, INTS10, INTS11/CPSF3L, INTS12, INTS13, INTS14 and INTS15. The core complex associates with protein phosphatase 2A subunits PPP2CA and PPP2R1A, to form the Integrator-PP2A (INTAC) complex. INTS14 is part of the tail subcomplex, composed of INTS10, INTS13, INTS14 and INTS15.

It localises to the nucleus. Functionally, component of the integrator complex, a multiprotein complex that terminates RNA polymerase II (Pol II) transcription in the promoter-proximal region of genes. The integrator complex provides a quality checkpoint during transcription elongation by driving premature transcription termination of transcripts that are unfavorably configured for transcriptional elongation: the complex terminates transcription by (1) catalyzing dephosphorylation of the C-terminal domain (CTD) of Pol II subunit POLR2A/RPB1 and SUPT5H/SPT5, (2) degrading the exiting nascent RNA transcript via endonuclease activity and (3) promoting the release of Pol II from bound DNA. The integrator complex is also involved in terminating the synthesis of non-coding Pol II transcripts, such as enhancer RNAs (eRNAs), small nuclear RNAs (snRNAs), telomerase RNAs and long non-coding RNAs (lncRNAs). Within the integrator complex, INTS14 is part of the integrator tail module that acts as a platform for the recruitment of transcription factors at promoters. The chain is Integrator complex subunit 14 from Xenopus tropicalis (Western clawed frog).